Here is a 98-residue protein sequence, read N- to C-terminus: NADH-ubiquinone oxidoreductase chain 4L (98 aa).

2 helical membrane-spanning segments follow: residues 29–49 and 61–81; these read SLLC…LLIL and ILLL…LVTV.

Belongs to the complex I subunit 4L family. Core subunit of respiratory chain NADH dehydrogenase (Complex I) which is composed of 45 different subunits.

The protein resides in the mitochondrion inner membrane. The enzyme catalyses a ubiquinone + NADH + 5 H(+)(in) = a ubiquinol + NAD(+) + 4 H(+)(out). In terms of biological role, core subunit of the mitochondrial membrane respiratory chain NADH dehydrogenase (Complex I) which catalyzes electron transfer from NADH through the respiratory chain, using ubiquinone as an electron acceptor. Part of the enzyme membrane arm which is embedded in the lipid bilayer and involved in proton translocation. The protein is NADH-ubiquinone oxidoreductase chain 4L (MT-ND4L) of Cheirogaleus medius (Fat-tailed dwarf lemur).